The primary structure comprises 481 residues: 6-phosphogluconate dehydrogenase, decarboxylating (481 aa).

NADP(+) is bound by residues 11-16, 34-36, 76-78, and Asn-104; these read GLAVMG, NRT, and VKG. Residues Asn-104 and 130–132 contribute to the substrate site; that span reads SGG. Catalysis depends on Lys-184, which acts as the Proton acceptor. 187–188 contributes to the substrate binding site; the sequence is HN. Residue Glu-191 is the Proton donor of the active site. Residues Tyr-192, Lys-259, Arg-286, Arg-445, and His-451 each contribute to the substrate site.

Belongs to the 6-phosphogluconate dehydrogenase family. As to quaternary structure, homodimer.

The enzyme catalyses 6-phospho-D-gluconate + NADP(+) = D-ribulose 5-phosphate + CO2 + NADPH. It functions in the pathway carbohydrate degradation; pentose phosphate pathway; D-ribulose 5-phosphate from D-glucose 6-phosphate (oxidative stage): step 3/3. Functionally, catalyzes the oxidative decarboxylation of 6-phosphogluconate to ribulose 5-phosphate and CO(2), with concomitant reduction of NADP to NADPH. This chain is 6-phosphogluconate dehydrogenase, decarboxylating (Pgd), found in Drosophila simulans (Fruit fly).